Consider the following 134-residue polypeptide: TSC22 domain family protein 3 (134 aa).

Met1 is modified (N-acetylmethionine). An AP1-binding region spans residues 1–60 (MNTEMYQTPMEVAVYQLHNFSISFFSSLLGGDVVSVKLDNSASGASVVAIDNKIEQAMDL). Residues Ala42 and Val73 each carry the phosphoserine modification. The interval 76-97 (LKEQIRELVEKNSQLERENTLL) is leucine-zipper. Residue Ser102 is modified to Phosphoserine. The tract at residues 108-134 (KFQSCLSPEEPAPESPQVPEAPGGSAV) is disordered.

The protein belongs to the TSC-22/Dip/Bun family. Can form homodimers, however it is likely to function as a monomer. Interacts with NFKB1. Interacts (via N-terminus) with JUN and FOS; these interactions inhibit the binding of active AP1 to its target DNA. In terms of assembly, interacts with MYOD1. Interacts with HDAC1; this interaction affects HDAC1 activity on MYOG promoter and thus inhibits MYOD1 transcriptional activity. As to expression, ubiquitously expressed, including in the fetal brain and liver. Expressed in brain, lung, spleen and skeletal muscle. Lower levels detected in heart and kidney. Not detected in the pancreas. In non-lymphoid tissues, in the absence of inflammation, the major source of constitutive expression is the macrophage lineage. Also expressed in cells from different hemopoietic cell lineages, including bone marrow cells, CD34+ stem cells, mature B- and T-cells, monocytes and granulocytes. Down-regulated in activated macrophages from inflammatory lesions of delayed-type hypersensitivity (DTH) reactions, such as in tuberculosis and in Crohn disease, whereas in Burkitt lymphoma, persists in macrophages involved in the phagocytosis of apoptotic malignant cells.

The protein resides in the cytoplasm. The protein localises to the nucleus. Protects T-cells from IL2 deprivation-induced apoptosis through the inhibition of FOXO3A transcriptional activity that leads to the down-regulation of the pro-apoptotic factor BCL2L11. In macrophages, plays a role in the anti-inflammatory and immunosuppressive effects of glucocorticoids and IL10. In T-cells, inhibits anti-CD3-induced NFKB1 nuclear translocation and thereby NFKB1 DNA-binding activities. In vitro, suppresses AP-1 transcription factor complex DNA-binding activities. Functionally, inhibits myogenic differentiation and mediates anti-myogenic effects of glucocorticoids by binding and regulating MYOD1 and HDAC1 transcriptional activity resulting in reduced expression of MYOG. The protein is TSC22 domain family protein 3 of Homo sapiens (Human).